The following is a 383-amino-acid chain: Protein phosphatase 2C homolog 4 (383 aa).

The region spanning 51–356 is the PPM-type phosphatase domain; sequence SLGLCTARGD…DDITCLVVRL (306 aa). Residues D92, D308, and D347 each contribute to the Mn(2+) site.

The protein belongs to the PP2C family. Monomer. The cofactor is Mg(2+). Mn(2+) serves as cofactor.

Its subcellular location is the vacuole membrane. The enzyme catalyses O-phospho-L-seryl-[protein] + H2O = L-seryl-[protein] + phosphate. The catalysed reaction is O-phospho-L-threonyl-[protein] + H2O = L-threonyl-[protein] + phosphate. Its function is as follows. Has a role in the regulation of vacuole fusion. This Schizosaccharomyces pombe (strain 972 / ATCC 24843) (Fission yeast) protein is Protein phosphatase 2C homolog 4 (ptc4).